The chain runs to 396 residues: Elongation factor Tu 2 (396 aa).

In terms of domain architecture, tr-type G spans 10–206; sequence KPHCNIGTIG…AVDAYIPQPE (197 aa). The interval 19–26 is G1; that stretch reads GHVDHGKT. GTP is bound at residue 19–26; the sequence is GHVDHGKT. T26 contacts Mg(2+). The segment at 60-64 is G2; it reads GITIS. The interval 81 to 84 is G3; the sequence is DCPG. GTP is bound by residues 81 to 85 and 136 to 139; these read DCPGH and NKCD. A G4 region spans residues 136–139; sequence NKCD. The segment at 174 to 176 is G5; that stretch reads SAL.

It belongs to the TRAFAC class translation factor GTPase superfamily. Classic translation factor GTPase family. EF-Tu/EF-1A subfamily. As to quaternary structure, monomer.

It localises to the cytoplasm. The enzyme catalyses GTP + H2O = GDP + phosphate + H(+). Functionally, GTP hydrolase that promotes the GTP-dependent binding of aminoacyl-tRNA to the A-site of ribosomes during protein biosynthesis. In Rhodopseudomonas palustris (strain BisB5), this protein is Elongation factor Tu 2.